Reading from the N-terminus, the 208-residue chain is Small ribosomal subunit protein uS4 (208 aa).

An S4 RNA-binding domain is found at 98–161; sequence RRLDNVIYRL…RKIPVLAEAQ (64 aa).

This sequence belongs to the universal ribosomal protein uS4 family. Part of the 30S ribosomal subunit. Contacts protein S5. The interaction surface between S4 and S5 is involved in control of translational fidelity.

In terms of biological role, one of the primary rRNA binding proteins, it binds directly to 16S rRNA where it nucleates assembly of the body of the 30S subunit. Functionally, with S5 and S12 plays an important role in translational accuracy. This is Small ribosomal subunit protein uS4 from Nitratidesulfovibrio vulgaris (strain ATCC 29579 / DSM 644 / CCUG 34227 / NCIMB 8303 / VKM B-1760 / Hildenborough) (Desulfovibrio vulgaris).